The primary structure comprises 128 residues: Sulfurtransferase TusD (128 aa).

The Cysteine persulfide intermediate role is filled by C78.

Belongs to the DsrE/TusD family. As to quaternary structure, heterohexamer, formed by a dimer of trimers. The hexameric TusBCD complex contains 2 copies each of TusB, TusC and TusD. The TusBCD complex interacts with TusE.

It localises to the cytoplasm. In terms of biological role, part of a sulfur-relay system required for 2-thiolation of 5-methylaminomethyl-2-thiouridine (mnm(5)s(2)U) at tRNA wobble positions. Accepts sulfur from TusA and transfers it in turn to TusE. The polypeptide is Sulfurtransferase TusD (Cronobacter sakazakii (strain ATCC BAA-894) (Enterobacter sakazakii)).